A 391-amino-acid chain; its full sequence is S-adenosylmethionine synthase (391 aa).

Residues 1 to 20 (MPRSDYLFTSESVSEGHPDK) form a disordered region. His17 lines the ATP pocket. Mg(2+) is bound at residue Asp19. Glu45 provides a ligand contact to K(+). The L-methionine site is built by Glu58 and Gln102. The flexible loop stretch occupies residues 102-112 (QSADIAQGVDA). ATP contacts are provided by residues 169 to 171 (DAK), 235 to 236 (KF), Asp244, 250 to 251 (RK), Ala267, and Lys271. Asp244 serves as a coordination point for L-methionine. Lys275 provides a ligand contact to L-methionine.

It belongs to the AdoMet synthase family. As to quaternary structure, homotetramer; dimer of dimers. Mg(2+) is required as a cofactor. K(+) serves as cofactor.

It localises to the cytoplasm. The catalysed reaction is L-methionine + ATP + H2O = S-adenosyl-L-methionine + phosphate + diphosphate. The protein operates within amino-acid biosynthesis; S-adenosyl-L-methionine biosynthesis; S-adenosyl-L-methionine from L-methionine: step 1/1. Catalyzes the formation of S-adenosylmethionine (AdoMet) from methionine and ATP. The overall synthetic reaction is composed of two sequential steps, AdoMet formation and the subsequent tripolyphosphate hydrolysis which occurs prior to release of AdoMet from the enzyme. The protein is S-adenosylmethionine synthase of Methylorubrum extorquens (strain CM4 / NCIMB 13688) (Methylobacterium extorquens).